Reading from the N-terminus, the 220-residue chain is Probable nicotinate-nucleotide adenylyltransferase (220 aa).

This sequence belongs to the NadD family.

It carries out the reaction nicotinate beta-D-ribonucleotide + ATP + H(+) = deamido-NAD(+) + diphosphate. It functions in the pathway cofactor biosynthesis; NAD(+) biosynthesis; deamido-NAD(+) from nicotinate D-ribonucleotide: step 1/1. Functionally, catalyzes the reversible adenylation of nicotinate mononucleotide (NaMN) to nicotinic acid adenine dinucleotide (NaAD). This Yersinia enterocolitica serotype O:8 / biotype 1B (strain NCTC 13174 / 8081) protein is Probable nicotinate-nucleotide adenylyltransferase.